A 234-amino-acid chain; its full sequence is Venom allergen 3 (234 aa).

The first 22 residues, 1-22 (MELIVSILWLAITAENLANTLA), serve as a signal peptide directing secretion. 4 cysteine pairs are disulfide-bonded: cysteine 26/cysteine 41, cysteine 31/cysteine 125, cysteine 52/cysteine 118, and cysteine 198/cysteine 216. The 150-residue stretch at 69 to 218 (VNKHNELRQR…WTKHYLVCNY (150 aa)) folds into the SCP domain. The interval 80 to 99 (ASGKEMRGTNGPQPPAVKMP) is disordered.

It belongs to the CRISP family. In terms of tissue distribution, expressed by the venom gland.

The protein resides in the secreted. This Solenopsis invicta (Red imported fire ant) protein is Venom allergen 3.